The chain runs to 405 residues: Aspartokinase (405 aa).

2 consecutive ACT domains span residues 267 to 344 and 345 to 405; these read VSME…AKVS and IVGV…QLDQ.

This sequence belongs to the aspartokinase family.

The enzyme catalyses L-aspartate + ATP = 4-phospho-L-aspartate + ADP. It participates in amino-acid biosynthesis; L-lysine biosynthesis via DAP pathway; (S)-tetrahydrodipicolinate from L-aspartate: step 1/4. Its pathway is amino-acid biosynthesis; L-methionine biosynthesis via de novo pathway; L-homoserine from L-aspartate: step 1/3. The protein operates within amino-acid biosynthesis; L-threonine biosynthesis; L-threonine from L-aspartate: step 1/5. This Helicobacter pylori (strain J99 / ATCC 700824) (Campylobacter pylori J99) protein is Aspartokinase (lysC).